The chain runs to 232 residues: 5'-methylthioadenosine/S-adenosylhomocysteine nucleosidase (232 aa).

The active-site Proton acceptor is the Glu-12. Residues Gly-78, Met-153, and 174–175 (ME) contribute to the substrate site. The Proton donor role is filled by Asp-198.

Belongs to the PNP/UDP phosphorylase family. MtnN subfamily.

The enzyme catalyses S-adenosyl-L-homocysteine + H2O = S-(5-deoxy-D-ribos-5-yl)-L-homocysteine + adenine. The catalysed reaction is S-methyl-5'-thioadenosine + H2O = 5-(methylsulfanyl)-D-ribose + adenine. It carries out the reaction 5'-deoxyadenosine + H2O = 5-deoxy-D-ribose + adenine. It participates in amino-acid biosynthesis; L-methionine biosynthesis via salvage pathway; S-methyl-5-thio-alpha-D-ribose 1-phosphate from S-methyl-5'-thioadenosine (hydrolase route): step 1/2. Functionally, catalyzes the irreversible cleavage of the glycosidic bond in both 5'-methylthioadenosine (MTA) and S-adenosylhomocysteine (SAH/AdoHcy) to adenine and the corresponding thioribose, 5'-methylthioribose and S-ribosylhomocysteine, respectively. Also cleaves 5'-deoxyadenosine, a toxic by-product of radical S-adenosylmethionine (SAM) enzymes, into 5-deoxyribose and adenine. The sequence is that of 5'-methylthioadenosine/S-adenosylhomocysteine nucleosidase from Geobacillus sp. (strain WCH70).